A 318-amino-acid polypeptide reads, in one-letter code: GTP 3',8-cyclase (318 aa).

In terms of domain architecture, Radical SAM core spans 4–218; sequence KHGRNIDYLR…MSRSDLIPIE (215 aa). Position 13 (arginine 13) interacts with GTP. Cysteine 20 and cysteine 24 together coordinate [4Fe-4S] cluster. Residue tyrosine 26 coordinates S-adenosyl-L-methionine. Cysteine 27 lines the [4Fe-4S] cluster pocket. Arginine 62 contacts GTP. Residue glycine 66 participates in S-adenosyl-L-methionine binding. A GTP-binding site is contributed by threonine 93. S-adenosyl-L-methionine is bound at residue serine 117. Lysine 154 serves as a coordination point for GTP. Residue methionine 188 coordinates S-adenosyl-L-methionine. [4Fe-4S] cluster contacts are provided by cysteine 248 and cysteine 251. 253–255 contributes to the GTP binding site; the sequence is KIR. Cysteine 265 lines the [4Fe-4S] cluster pocket.

This sequence belongs to the radical SAM superfamily. MoaA family. In terms of assembly, monomer and homodimer. Requires [4Fe-4S] cluster as cofactor.

It catalyses the reaction GTP + AH2 + S-adenosyl-L-methionine = (8S)-3',8-cyclo-7,8-dihydroguanosine 5'-triphosphate + 5'-deoxyadenosine + L-methionine + A + H(+). Its pathway is cofactor biosynthesis; molybdopterin biosynthesis. In terms of biological role, catalyzes the cyclization of GTP to (8S)-3',8-cyclo-7,8-dihydroguanosine 5'-triphosphate. The sequence is that of GTP 3',8-cyclase from Clostridium acetobutylicum (strain ATCC 824 / DSM 792 / JCM 1419 / IAM 19013 / LMG 5710 / NBRC 13948 / NRRL B-527 / VKM B-1787 / 2291 / W).